Here is a 66-residue protein sequence, read N- to C-terminus: U-limacoditoxin(59)-Dv128 (66 aa).

The signal sequence occupies residues methionine 1–alanine 20. Residues threonine 21–serine 66 are 3 X 16 AA tandem repeats of [FI]-G-G-G-L-G-G-A-V-G-G-R-R-R-R-D. 2 repeat units span residues phenylalanine 22–aspartate 37 and isoleucine 38–aspartate 53. A Glycine amide modification is found at glycine 31. The propeptide occupies arginine 33–aspartate 37. Residue glycine 47 is modified to Glycine amide. The propeptide occupies arginine 49–aspartate 53. The stretch at isoleucine 54 to glycine 64 is one 3; half-length repeat.

It belongs to the limacoditoxin-59 family. Expressed by the venom secretory cell of the spine. The spine is a cuticular structure containing a single large nucleated venom-secreting cell at its base. It is an independent unit capable of producing, storing and injecting venom. On the back of D.vulnerans caterpillars, spines are grouped together by 50 to 100 to form scoli, of which there are eight in D.vulnerans.

Its subcellular location is the secreted. In terms of biological role, probable toxin. The chain is U-limacoditoxin(59)-Dv128 from Doratifera vulnerans (Mottled cup moth).